The chain runs to 592 residues: Probable tubulin polyglutamylase TTLL2 (592 aa).

2 disordered regions span residues 1–23 (MRGR…TTTP) and 51–77 (GVSI…MAED). Positions 7–23 (CSSTQSQALGSLRTTTP) are enriched in polar residues. The TTL domain occupies 84–427 (LKPLVFRVDE…NGLRNEGREA (344 aa)). ATP-binding positions include Lys-212, 218–219 (RG), 240–243 (QKYI), and 253–255 (KCD). Arg-218 contacts a protein. Arg-279 contributes to the L-glutamate binding site. 298-299 (TN) is an ATP binding site. L-glutamate-binding residues include Ser-301 and Lys-321. 3 residues coordinate Mg(2+): Asp-373, Glu-386, and Asn-388. Lys-404 provides a ligand contact to L-glutamate.

This sequence belongs to the tubulin--tyrosine ligase family. Mg(2+) serves as cofactor. As to expression, testis.

Its function is as follows. Probable tubulin polyglutamylase that generates side chains of glutamate on the gamma-carboxyl group of specific glutamate residues within the C-terminal tail of target proteins. Similar to TTLL1, may acquire enzymatic activity only in complex with other proteins as it is most likely lacking domains important for autonomous activity. Probably involved in the side-chain initiation step of the polyglutamylation reaction rather than the elongation step. This is Probable tubulin polyglutamylase TTLL2 from Homo sapiens (Human).